Reading from the N-terminus, the 126-residue chain is UPF0102 protein gll3754 (126 aa).

The protein belongs to the UPF0102 family.

The protein is UPF0102 protein gll3754 of Gloeobacter violaceus (strain ATCC 29082 / PCC 7421).